The following is a 140-amino-acid chain: L-fucose mutarotase (140 aa).

Histidine 22 acts as the Proton donor in catalysis. Residues aspartate 30, arginine 107, and 129–131 (YGN) contribute to the substrate site.

Belongs to the RbsD / FucU family. FucU mutarotase subfamily. In terms of assembly, homodecamer.

The protein localises to the cytoplasm. It catalyses the reaction alpha-L-fucose = beta-L-fucose. It participates in carbohydrate metabolism; L-fucose metabolism. Functionally, involved in the anomeric conversion of L-fucose. The polypeptide is L-fucose mutarotase (Shigella boydii serotype 18 (strain CDC 3083-94 / BS512)).